We begin with the raw amino-acid sequence, 551 residues long: DEAD-box ATP-dependent RNA helicase 47, mitochondrial (551 aa).

A mitochondrion-targeting transit peptide spans 1–29 (MAASTSTRFLVLLKDFSAFRKISWTCAAT). Residues 110–138 (KSFEELGLPDSLLDSLEREGFSVPTDVQS) carry the Q motif motif. The region spanning 141-340 (VPAIIKGHDA…KSWSHEPVLV (200 aa)) is the Helicase ATP-binding domain. 154–161 (SYTGSGKT) lines the ATP pocket. Residues 274–277 (DEVD) carry the DEAD box motif. Residues 397–548 (TLRRCVHALD…ELVVTEEDKA (152 aa)) form the Helicase C-terminal domain.

Belongs to the DEAD box helicase family. Mostly expressed in leaves and flowers, and, to a lower extent, in roots, seedlings and siliques, especially in meristematic regions.

The protein localises to the mitochondrion. The enzyme catalyses ATP + H2O = ADP + phosphate + H(+). In terms of biological role, essential protein required during embryogenesis. Required for mitochondrial metabolism. Necessary for normal plasmodesmata (PD) development and aperture regulation. In Arabidopsis thaliana (Mouse-ear cress), this protein is DEAD-box ATP-dependent RNA helicase 47, mitochondrial (RH47).